The following is a 265-amino-acid chain: Undecaprenyl-diphosphatase (265 aa).

Helical transmembrane passes span 1–21, 39–59, 87–107, 110–130, 144–164, 187–207, 217–237, and 244–264; these read MDFL…FLPI, QGVG…ILYF, WAVV…LDYI, ALRA…LLAA, IGFK…IPGT, FSFF…LLTI, LGFL…IHFF, and FGMW…YLLF.

This sequence belongs to the UppP family.

It is found in the cell inner membrane. It catalyses the reaction di-trans,octa-cis-undecaprenyl diphosphate + H2O = di-trans,octa-cis-undecaprenyl phosphate + phosphate + H(+). Catalyzes the dephosphorylation of undecaprenyl diphosphate (UPP). Confers resistance to bacitracin. This is Undecaprenyl-diphosphatase from Idiomarina loihiensis (strain ATCC BAA-735 / DSM 15497 / L2-TR).